The following is a 230-amino-acid chain: CASP-like protein 2A2 (230 aa).

The interval 1–23 (MEKKDEGNPPMAVMGSRDENEDV) is disordered. Topologically, residues 1-29 (MEKKDEGNPPMAVMGSRDENEDVKSTMRT) are cytoplasmic. A helical transmembrane segment spans residues 30–50 (AETMLRLVPVALCVSALVVML). Residues 51-71 (KNTQTNDYGSLSYSDLGAFRY) are Extracellular-facing. A helical transmembrane segment spans residues 72–92 (LVNANGICAGYSLLSAVIVAM). Topologically, residues 93 to 100 (PRAWTMPQ) are cytoplasmic. Residues 101 to 121 (AWTFFLLDQVLTYVILAAGTV) form a helical membrane-spanning segment. Topologically, residues 122-151 (STEVLYLANKGDTSIAWSAACASFGGFCHK) are extracellular. Residues 152 to 172 (ALISTVITFVAVIFYAALSLV) form a helical membrane-spanning segment. The Cytoplasmic portion of the chain corresponds to 173–230 (SSYKLFSKYDAPVVTQSGEGIKTVTLGSPPPPPPPPPSNLHLHLHAKLACPAHNNSPN).

The protein belongs to the Casparian strip membrane proteins (CASP) family. Homodimer and heterodimers.

The protein localises to the cell membrane. The chain is CASP-like protein 2A2 from Populus trichocarpa (Western balsam poplar).